A 251-amino-acid chain; its full sequence is Gamma-glutamyl peptidase 5 (251 aa).

Residues 17-214 (STFVKKAYGG…IDRVVNLKLM (198 aa)) form the Glutamine amidotransferase type-1 domain. Cys101 acts as the Nucleophile in catalysis. Active-site residues include His193 and Glu195.

It belongs to the peptidase C26 family.

It is found in the cytoplasm. The protein localises to the cytosol. The protein operates within secondary metabolite biosynthesis. Its function is as follows. Involved in glucosinolate biosynthesis. Hydrolyzes the gamma-glutamyl peptide bond of several glutathione (GSH) conjugates to produce Cys-Gly conjugates related to glucosinolates. The gamma-Glu-Cys-Gly-GSH conjugates are the sulfur-donating molecule in glucosinolate biosynthesis. The chain is Gamma-glutamyl peptidase 5 from Arabidopsis thaliana (Mouse-ear cress).